Here is an 867-residue protein sequence, read N- to C-terminus: Bifunctional cis-abienol synthase, chloroplastic (867 aa).

The transit peptide at 1 to 49 (MALPVYSLKSHIPITTIASAKMNYTPNKGMITANGRSRRIRLSPNKIVA) directs the protein to the chloroplast. A substrate-binding site is contributed by K270. The DXDD motif motif lies at 403-406 (DIDD). K490 provides a ligand contact to substrate. 6 residues coordinate Mg(2+): D622, D626, N763, D764, T767, and E771. A DDXXD motif motif is present at residues 622-626 (DDLYD).

Belongs to the terpene synthase family. Tpsd subfamily. The cofactor is Mg(2+).

It localises to the plastid. Its subcellular location is the chloroplast. It carries out the reaction 8-hydroxycopalyl diphosphate = cis-abienol + diphosphate. It catalyses the reaction (2E,6E,10E)-geranylgeranyl diphosphate + H2O = 8-hydroxycopalyl diphosphate. Its pathway is terpene metabolism; oleoresin biosynthesis. In terms of biological role, involved in the biosynthesis of cis-abienol, a labdane diterpene that can be used as synthesis precursor of ambergris substitution fragance products. Bifunctional class I/II enzyme in which both the bicyclization and water capture occur in the class II active site, resulting in an intermediary labda-13-en-8-ol diphosphate, which undergoes cleavage of the diphosphate group and final deprotonation at the class I active site. No activity with copalyl diphosphate as substrate. The chain is Bifunctional cis-abienol synthase, chloroplastic (CAS) from Abies balsamea (Balsam fir).